The following is a 288-amino-acid chain: Heme oxygenase 1 (288 aa).

Residues 1–265 (MERPQPDSMP…KPPLNTRSQA (265 aa)) are Cytoplasmic-facing. Residues Lys-18, His-25, Tyr-134, and Arg-183 each contribute to the heme b site. The segment at 223-260 (HDTKDQSPSRAPGLRQRASNKVQDSAPVETPRGKPPLN) is disordered. Ser-229 bears the Phosphoserine mark. The chain crosses the membrane as a helical; Anchor for type IV membrane protein span at residues 266–288 (PLLRWVLTLSFLVATVAVGLYAM).

Belongs to the heme oxygenase family. In terms of assembly, (Microbial infection) Interacts with SARS-CoV-2 ORF3A protein; the interaction promotes ORF3A-induced autophagy but is unlikely to be involved in ORF3A-mediated induction of reticulophagy. As to quaternary structure, homodimer and higher order homooligomer. Oligomerization is crucial for its stability and function in the endoplasmic reticulum. Interacts with FLVCR2; this interaction is potentiated in the presence of heme. Post-translationally, a soluble form arises by proteolytic removal of the membrane anchor. In terms of tissue distribution, expressed at higher levels in renal cancer tissue than in normal tissue (at protein level).

The protein localises to the endoplasmic reticulum membrane. It carries out the reaction heme b + 3 reduced [NADPH--hemoprotein reductase] + 3 O2 = biliverdin IXalpha + CO + Fe(2+) + 3 oxidized [NADPH--hemoprotein reductase] + 3 H2O + H(+). Its function is as follows. Catalyzes the oxidative cleavage of heme at the alpha-methene bridge carbon, released as carbon monoxide (CO), to generate biliverdin IXalpha, while releasing the central heme iron chelate as ferrous iron. Affords protection against programmed cell death and this cytoprotective effect relies on its ability to catabolize free heme and prevent it from sensitizing cells to undergo apoptosis. In terms of biological role, (Microbial infection) During SARS-COV-2 infection, promotes SARS-CoV-2 ORF3A-mediated autophagy but is unlikely to be required for ORF3A-mediated induction of reticulophagy. Functionally, catalyzes the oxidative cleavage of heme at the alpha-methene bridge carbon, released as carbon monoxide (CO), to generate biliverdin IXalpha, while releasing the central heme iron chelate as ferrous iron. The polypeptide is Heme oxygenase 1 (HMOX1) (Homo sapiens (Human)).